The sequence spans 220 residues: Cytidylate kinase (220 aa).

ATP is bound at residue 9 to 17; sequence GPAASGKST.

It belongs to the cytidylate kinase family. Type 1 subfamily.

It localises to the cytoplasm. The catalysed reaction is CMP + ATP = CDP + ADP. It catalyses the reaction dCMP + ATP = dCDP + ADP. The sequence is that of Cytidylate kinase from Thermotoga maritima (strain ATCC 43589 / DSM 3109 / JCM 10099 / NBRC 100826 / MSB8).